The following is a 408-amino-acid chain: Chaperonin GroEL (408 aa).

Residues 30 to 33, K51, and 87 to 91 contribute to the ATP site; these read TLGP and DGTTT.

The protein belongs to the chaperonin (HSP60) family. Forms a cylinder of 14 subunits composed of two heptameric rings stacked back-to-back. Interacts with the co-chaperonin GroES.

It localises to the cytoplasm. The catalysed reaction is ATP + H2O + a folded polypeptide = ADP + phosphate + an unfolded polypeptide.. Functionally, together with its co-chaperonin GroES, plays an essential role in assisting protein folding. The GroEL-GroES system forms a nano-cage that allows encapsulation of the non-native substrate proteins and provides a physical environment optimized to promote and accelerate protein folding. The protein is Chaperonin GroEL of Rickettsia rickettsii.